We begin with the raw amino-acid sequence, 74 residues long: Ubiquitin-like protein FUBI (74 aa).

Belongs to the ubiquitin family.

This Bos taurus (Bovine) protein is Ubiquitin-like protein FUBI (FAU).